The chain runs to 46 residues: KTCMTKKEGWGRCLIDTTCAHSCRKYGYMGGKCQGITRRCYCLLNC.

4 cysteine pairs are disulfide-bonded: Cys-3-Cys-46, Cys-13-Cys-33, Cys-19-Cys-40, and Cys-23-Cys-42.

In terms of assembly, monomer. Present in seeds, cotyledons and leaves. Not found in roots or stems.

Has antibacterial activity against the Gram-positive bacterium S.aureus and the Gram-negative bacteria E.coli and P.syringae. Does not have antibacterial activity against the phytopathogenic bacteria R.solanacearum, Rhataybacter sp and Erwinia sp. Does not inhibit trypsin, chymotrypsin or alpha-amylases. The chain is Defensin-like protein 2 from Vigna unguiculata (Cowpea).